The sequence spans 304 residues: uncharacterized protein (304 aa).

Residue 72 to 79 participates in ATP binding; that stretch reads GPTGSGKT.

This sequence belongs to the CbbQ/NirQ/NorQ/GpvN family.

This is an uncharacterized protein from Bacillus subtilis (strain 168).